Reading from the N-terminus, the 169-residue chain is N-alpha-acetyltransferase 50 (169 aa).

Residues 6–155 (IELGDVTPHN…DAHVLQKNLK (150 aa)) form the N-acetyltransferase domain. At threonine 12 the chain carries Phosphothreonine. Tyrosine 31 serves as a coordination point for substrate. 2 positions are modified to N6-acetyllysine: lysine 34 and lysine 37. The active site involves tyrosine 73. Methionine 75 contacts substrate. 77–90 (LGCLAPYRRLGIGT) contributes to the acetyl-CoA binding site. Position 110 is a phosphotyrosine (tyrosine 110). Histidine 112 is a catalytic residue. 117 to 126 (NESAIDFYRK) lines the CoA pocket. The tract at residues 138–141 (YYKR) is substrate. N6-acetyllysine is present on lysine 140.

It belongs to the acetyltransferase family. GNAT subfamily. In terms of assembly, component of the N-terminal acetyltransferase E (NatE) complex at least composed of NAA10, NAA15 and NAA50. Interacts with NAA10. Interacts with NAA15. Predominantly interacts with NAA15 in the N-terminal acetyltransferase A complex (NatA complex); the interactions reduce the acetylation activity of the NatA complex. Component of the N-terminal acetyltransferase E (NatE)/HYPK complex at least composed of NAA10, NAA15, NAA50 and HYPK. Within the complex interacts with NAA15. Its capacity to interact with the NatA complex is reduced by HYPK. Interacts with NAA35.

It localises to the cytoplasm. The protein localises to the nucleus. The catalysed reaction is N-terminal L-methionyl-L-alanyl-[protein] + acetyl-CoA = N-terminal N(alpha)-acetyl-L-methionyl-L-alanyl-[protein] + CoA + H(+). It carries out the reaction N-terminal L-methionyl-L-seryl-[protein] + acetyl-CoA = N-terminal N(alpha)-acetyl-L-methionyl-L-seryl-[protein] + CoA + H(+). It catalyses the reaction N-terminal L-methionyl-L-valyl-[protein] + acetyl-CoA = N-terminal N(alpha)-acetyl-L-methionyl-L-valyl-[protein] + CoA + H(+). The enzyme catalyses N-terminal L-methionyl-L-threonyl-[protein] + acetyl-CoA = N-terminal N(alpha)-acetyl-L-methionyl-L-threonyl-[protein] + CoA + H(+). The catalysed reaction is N-terminal L-methionyl-L-lysyl-[protein] + acetyl-CoA = N-terminal N(alpha)-acetyl-L-methionyl-L-lysyl-[protein] + CoA + H(+). It carries out the reaction N-terminal L-methionyl-L-leucyl-[protein] + acetyl-CoA = N-terminal N(alpha)-acetyl-L-methionyl-L-leucyl-[protein] + CoA + H(+). It catalyses the reaction N-terminal L-methionyl-L-phenylalanyl-[protein] + acetyl-CoA = N-terminal N(alpha)-acetyl-L-methionyl-L-phenylalanyl-[protein] + CoA + H(+). The enzyme catalyses N-terminal L-methionyl-L-tyrosyl-[protein] + acetyl-CoA = N-terminal N(alpha)-acetyl-L-methionyl-L-tyrosyl-[protein] + CoA + H(+). Its function is as follows. N-alpha-acetyltransferase that acetylates the N-terminus of proteins that retain their initiating methionine. Has a broad substrate specificity: able to acetylate the initiator methionine of most peptides, except for those with a proline in second position. Also displays N-epsilon-acetyltransferase activity by mediating acetylation of the side chain of specific lysines on proteins. Autoacetylates in vivo. The relevance of N-epsilon-acetyltransferase activity is however unclear: able to acetylate H4 in vitro, but this result has not been confirmed in vivo. Component of N-alpha-acetyltransferase complexes containing NAA10 and NAA15, which has N-alpha-acetyltransferase activity. Does not influence the acetyltransferase activity of NAA10. However, it negatively regulates the N-alpha-acetyltransferase activity of the N-terminal acetyltransferase A complex (also called the NatA complex). The multiprotein complexes probably constitute the major contributor for N-terminal acetylation at the ribosome exit tunnel, with NAA10 acetylating all amino termini that are devoid of methionine and NAA50 acetylating other peptides. Required for sister chromatid cohesion during mitosis by promoting binding of CDCA5/sororin to cohesin: may act by counteracting the function of NAA10. This Bos taurus (Bovine) protein is N-alpha-acetyltransferase 50 (NAA50).